Consider the following 349-residue polypeptide: Fe(3+) ions import ATP-binding protein FbpC (349 aa).

The ABC transporter domain occupies 4–236 (LELHHIGKSY…PVDEPTATFL (233 aa)). 36 to 43 (GPSGSGKT) is an ATP binding site.

Belongs to the ABC transporter superfamily. Fe(3+) ion importer (TC 3.A.1.10) family. The complex is composed of two ATP-binding proteins (FbpC), two transmembrane proteins (FbpB) and a solute-binding protein (FbpA).

It is found in the cell inner membrane. The enzyme catalyses Fe(3+)(out) + ATP + H2O = Fe(3+)(in) + ADP + phosphate + H(+). Functionally, part of the ABC transporter complex FbpABC involved in Fe(3+) ions import. Responsible for energy coupling to the transport system. In Yersinia pseudotuberculosis serotype I (strain IP32953), this protein is Fe(3+) ions import ATP-binding protein FbpC.